Here is a 471-residue protein sequence, read N- to C-terminus: Glutamate--tRNA ligase (471 aa).

Positions 9 to 19 (PSPTGYLHVGG) match the 'HIGH' region motif. Residues Cys98, Cys100, Cys125, and His127 each coordinate Zn(2+). The 'KMSKS' region motif lies at 237-241 (KLSKR). Lys240 lines the ATP pocket.

This sequence belongs to the class-I aminoacyl-tRNA synthetase family. Glutamate--tRNA ligase type 1 subfamily. In terms of assembly, monomer. Requires Zn(2+) as cofactor.

It is found in the cytoplasm. It catalyses the reaction tRNA(Glu) + L-glutamate + ATP = L-glutamyl-tRNA(Glu) + AMP + diphosphate. Functionally, catalyzes the attachment of glutamate to tRNA(Glu) in a two-step reaction: glutamate is first activated by ATP to form Glu-AMP and then transferred to the acceptor end of tRNA(Glu). The sequence is that of Glutamate--tRNA ligase from Citrobacter koseri (strain ATCC BAA-895 / CDC 4225-83 / SGSC4696).